The sequence spans 1290 residues: MTKRNKKNNKLYKNIKAIKLSIASNDTILNWSEGEVTKAETINYKSLKPEPGGLFDEAIFGPVKDYECACGKFKKIKYRGVRCDRCGVWVTESIVRRERMGHIALVSPVAHIWMSKELPSPSKISLVLNISYKEVEQVLYFVNYIVLDTGKIKDPKIMPFKFKEVLDLAGKGSLTTRQKMRRVIGYIFRNLIKNRSSEDYRKGKIFYESLKNSSLPFSLNDAFNYIKKYTGFRVGIGAEAILELLNKIDLNYEFSKLNDALRKAKKDSVEDAKVKKILRQLETISWFRNSKLHPKNMILHTVPVIPPDIRPIIQLDGAKFTTSDINNFYRRVIIRNDRLRRILEDGTVPAIVVNNEKRLLQESVDALFDNSSRHKPALSKDKRSLKSLTDRLKGKQGLFRHNLLGKRVDYSGRSVIVVGPELKMYEVGIPALMILKLFKPFIIHGLINKFDSNGNEIRPIASSIRQAEDMIKNQDDLIWGIVYDVIKDRPVLLNRAPTLHRLGIQAFEPRIVDGKAIRLHPLVTTAFNADFDGDQMAVHVPLSENAVNEARAILLASKHILGLKDGRPIVTPTQDMVLGNYYLTTERKGQTGEGIIFGTVHEARAAYEAGKVHLHAIVGISTKAFPNKHFEAQGTLITTVGKIIFNDVLGDNIPYINEGEFDEHACPQKFIVPPSGDVRAAIAAHQVLPAFGKKVISKLIDLLYTVVEFKDLPRILENIKALGFKYSTHSSTTVSVFDIPKYSNKQQYFDEADQQVLKYKQFYNKGLLTDDERYKRVVKLWNGVKEKVSSEIQDLIKREEYRDNSIVVMADSGARGNISNFTQLFGMRGLMSKSFNYERNNQSKIIKDTIEVPIKHSFLEGLTINEYFNSSYGARKGMTDTAMKTAKSGYMTRKLVDATHELIINHDDCGTRKGIVVEAIVETKTRSLVESLFDRIVNRYTIGPILDPETKAEIVPANSLITQELAKQICATSIKQVLVRSVIYCERENGVCQYCFGVDLSTGKLVELGTAVGVIAAQSIGEPGTQLTMRTFHTGGVSTENNLAQGFERLKQIFEVVAPKDYERCVISEVKGVVKSITTTQNAQEVLIESSVDERTYSIPFSAQLRVKVGDAVELGSKITEGSIDIRQLLRVAGIQRVRQYMIVEIQKVYRIQGIEIADKYVEIIIRQLTSLLQVTDAGSSNLFVGQLVHSHHLNELNKSLLLSGKMPVIAINQVFGIDEAASKSNSFLSAASFQDTKKILTDAAVKTQVDYLLGLKENVIIGGKIPAGTGFLTDEELAYLGAKTVQEEY.

The Zn(2+) site is built by Cys-68, Cys-70, Cys-83, and Cys-86. Mg(2+)-binding residues include Asp-530, Asp-532, and Asp-534. Zn(2+)-binding residues include Cys-909, Cys-985, Cys-992, and Cys-995.

It belongs to the RNA polymerase beta' chain family. In terms of assembly, the RNAP catalytic core consists of 2 alpha, 1 beta, 1 beta' and 1 omega subunit. When a sigma factor is associated with the core the holoenzyme is formed, which can initiate transcription. It depends on Mg(2+) as a cofactor. Zn(2+) serves as cofactor.

The catalysed reaction is RNA(n) + a ribonucleoside 5'-triphosphate = RNA(n+1) + diphosphate. DNA-dependent RNA polymerase catalyzes the transcription of DNA into RNA using the four ribonucleoside triphosphates as substrates. The protein is DNA-directed RNA polymerase subunit beta' of Mycoplasma pneumoniae (strain ATCC 29342 / M129 / Subtype 1) (Mycoplasmoides pneumoniae).